Reading from the N-terminus, the 509-residue chain is Maturase K (509 aa).

Belongs to the intron maturase 2 family. MatK subfamily.

The protein localises to the plastid. It is found in the chloroplast. Its function is as follows. Usually encoded in the trnK tRNA gene intron. Probably assists in splicing its own and other chloroplast group II introns. In Jacaranda mimosifolia (Jacaranda), this protein is Maturase K.